The primary structure comprises 224 residues: Mammalian ependymin-related protein 1 (224 aa).

An N-terminal signal peptide occupies residues 1–37 (MPGRAPLRTVPGALGAWLLGGLWAWTLCGLCSLGAVG). 3 disulfide bridges follow: Cys42/Cys172, Cys88/Cys222, and Cys113/Cys210. Asn130 and Asn182 each carry an N-linked (GlcNAc...) asparagine glycan.

Belongs to the ependymin family. As to quaternary structure, homodimer. In terms of processing, N-glycosylated; the glycan contains mannose-6-phosphate moieties. Ubiquitous. Detected in brain, heart, skeletal muscle, kidney, testis, ovary and prostate.

The protein localises to the lysosome lumen. Its subcellular location is the secreted. Functionally, binds anionic lipids and gangliosides at acidic pH. The polypeptide is Mammalian ependymin-related protein 1 (EPDR1) (Homo sapiens (Human)).